The following is a 412-amino-acid chain: Heat stress transcription factor A-3 (412 aa).

A DNA-binding region spans residues 53–147; that stretch reads IPPFLSKTFD…LLKNIHRRRS (95 aa). A disordered region spans residues 144-170; sequence RRRSPQSNQTCCSSTSQSQGSPTEVGG. Over residues 148–166 the composition is skewed to low complexity; it reads PQSNQTCCSSTSQSQGSPT. The interval 159 to 225 is hydrophobic repeat HR-A/B; the sequence is SQSQGSPTEV…QLLSFLAKLF (67 aa). Positions 166 to 224 form a coiled coil; it reads TEVGGEIEKLRKERRALMEEMVELQQQSRGTARHVDTVNQRLKAAEQRQKQLLSFLAKL. Positions 238-254 match the Bipartite nuclear localization signal motif; that stretch reads KGKEKGGALGLEKARKK. The AHA1 signature appears at 277–286; that stretch reads DDWERLLMYD. An AHA2 motif is present at residues 381 to 390; it reads DVCWEQFAAG.

It belongs to the HSF family. Class A subfamily. In terms of assembly, homotrimer. In terms of processing, exhibits temperature-dependent phosphorylation.

The protein resides in the nucleus. Functionally, transcriptional activator that specifically binds DNA sequence 5'-AGAAnnTTCT-3' known as heat shock promoter elements (HSE). Involved in heat stress response. Activated by DREB2A under heat stress. This is Heat stress transcription factor A-3 (HSFA3) from Arabidopsis thaliana (Mouse-ear cress).